Here is a 111-residue protein sequence, read N- to C-terminus: Translation initiation factor 1A (111 aa).

One can recognise an S1-like domain in the interval K11 to T83.

It belongs to the eIF-1A family.

Its function is as follows. Seems to be required for maximal rate of protein biosynthesis. Enhances ribosome dissociation into subunits and stabilizes the binding of the initiator Met-tRNA(I) to 40 S ribosomal subunits. In Methanopyrus kandleri (strain AV19 / DSM 6324 / JCM 9639 / NBRC 100938), this protein is Translation initiation factor 1A (eIF1A).